Here is a 170-residue protein sequence, read N- to C-terminus: Neurotensin/neuromedin N (170 aa).

Positions 1 to 23 (MMAGMKIQLVCMILLAFSSWSLC) are cleaved as a signal peptide.

The protein belongs to the neurotensin family. Interacts with NTSR1. Interacts with SORT1. Interacts with SORL1. Neurotensin is cleaved and degraded by Angiotensin-converting enzyme (ACE) and neprilysin (MME).

The protein localises to the secreted. It is found in the cytoplasmic vesicle. It localises to the secretory vesicle. Its function is as follows. Neurotensin may play an endocrine or paracrine role in the regulation of fat metabolism. It causes contraction of smooth muscle. In Canis lupus familiaris (Dog), this protein is Neurotensin/neuromedin N (NTS).